A 398-amino-acid polypeptide reads, in one-letter code: tRNA(Ile)-lysidine synthase (398 aa).

17 to 22 contributes to the ATP binding site; that stretch reads SGGPDS.

The protein belongs to the tRNA(Ile)-lysidine synthase family.

It localises to the cytoplasm. The enzyme catalyses cytidine(34) in tRNA(Ile2) + L-lysine + ATP = lysidine(34) in tRNA(Ile2) + AMP + diphosphate + H(+). In terms of biological role, ligates lysine onto the cytidine present at position 34 of the AUA codon-specific tRNA(Ile) that contains the anticodon CAU, in an ATP-dependent manner. Cytidine is converted to lysidine, thus changing the amino acid specificity of the tRNA from methionine to isoleucine. The protein is tRNA(Ile)-lysidine synthase of Mesoplasma florum (strain ATCC 33453 / NBRC 100688 / NCTC 11704 / L1) (Acholeplasma florum).